Reading from the N-terminus, the 165-residue chain is Glutamyl-tRNA(Gln) amidotransferase subunit F, mitochondrial (165 aa).

The N-terminal 19 residues, 1–19 (MKSILRSTTRNLITSSRRF), are a transit peptide targeting the mitochondrion.

This sequence belongs to the GatF family. In terms of assembly, subunit of the heterotrimeric GatFAB amidotransferase (AdT) complex, composed of A, B and F subunits.

The protein resides in the mitochondrion inner membrane. The enzyme catalyses L-glutamyl-tRNA(Gln) + L-glutamine + ATP + H2O = L-glutaminyl-tRNA(Gln) + L-glutamate + ADP + phosphate + H(+). Its function is as follows. Allows the formation of correctly charged Gln-tRNA(Gln) through the transamidation of misacylated Glu-tRNA(Gln) in the mitochondria. The reaction takes place in the presence of glutamine and ATP through an activated gamma-phospho-Glu-tRNA(Gln). Required for proper protein synthesis within the mitochondrion. In Candida albicans (strain SC5314 / ATCC MYA-2876) (Yeast), this protein is Glutamyl-tRNA(Gln) amidotransferase subunit F, mitochondrial.